Consider the following 599-residue polypeptide: Elongation factor 4 (599 aa).

The region spanning 5–187 is the tr-type G domain; it reads SHIRNFSIIA…VLIKSVPAPV (183 aa). GTP contacts are provided by residues 17-22 and 134-137; these read DHGKST and NKID.

The protein belongs to the TRAFAC class translation factor GTPase superfamily. Classic translation factor GTPase family. LepA subfamily.

Its subcellular location is the cell inner membrane. The enzyme catalyses GTP + H2O = GDP + phosphate + H(+). Its function is as follows. Required for accurate and efficient protein synthesis under certain stress conditions. May act as a fidelity factor of the translation reaction, by catalyzing a one-codon backward translocation of tRNAs on improperly translocated ribosomes. Back-translocation proceeds from a post-translocation (POST) complex to a pre-translocation (PRE) complex, thus giving elongation factor G a second chance to translocate the tRNAs correctly. Binds to ribosomes in a GTP-dependent manner. This chain is Elongation factor 4, found in Saccharophagus degradans (strain 2-40 / ATCC 43961 / DSM 17024).